Reading from the N-terminus, the 1286-residue chain is ABC transporter B family member 1 (1286 aa).

2 helical membrane-spanning segments follow: residues 42-62 and 93-113; these read VLMG…PLFL and FLVV…CWMW. Residues 44–333 enclose the ABC transmembrane type-1 1 domain; the sequence is MGIGSVGAFV…SAPSMAAFAK (290 aa). Asp139 contacts ATP. 2 helical membrane-spanning segments follow: residues 166-186 and 187-207; these read LGNF…GFTA and VWQL…IGGI. N-linked (GlcNAc...) asparagine glycosylation occurs at Asn217. Transmembrane regions (helical) follow at residues 277–297 and 301–321; these read ATYF…GYLV and LTNG…GLAL. Tyr286 serves as a coordination point for brassinolide. Residues 368 to 604 form the ABC transporter 1 domain; it reads VELKNVDFSY…GENGVYAKLI (237 aa). Positions 377, 379, 380, 408, 409, 410, and 411 each coordinate ATP. The interval 614–647 is disordered; it reads AMSNARKSSARPSSARNSVSSPIMTRNSSYGRSP. Positions 616–635 are enriched in low complexity; sequence SNARKSSARPSSARNSVSSP. Asn640 carries an N-linked (GlcNAc...) asparagine glycan. Residues 700–988 enclose the ABC transmembrane type-1 2 domain; sequence ALLGSVGSVI…TLTLAPDFIK (289 aa). A run of 2 helical transmembrane segments spans residues 705 to 725 and 745 to 765; these read VGSV…SAVL and YLLI…HSFW. Asn771 is a glycosylation site (N-linked (GlcNAc...) asparagine). Asp793 serves as a coordination point for ATP. N-linked (GlcNAc...) asparagine glycosylation is present at Asn797. The next 4 helical transmembrane spans lie at 821 to 843, 845 to 867, 932 to 952, and 967 to 987; these read ISVI…VLQW, LALV…KMFM, VAQF…SWLV, and MVLM…PDFI. Residues Tyr941 and Glu978 each coordinate brassinolide. The region spanning 1024 to 1260 is the ABC transporter 2 domain; that stretch reads VELKHIDFSY…HPDGIYARMI (237 aa). ATP contacts are provided by Tyr1033, Arg1036, Gly1064, Lys1065, and Ser1066. The segment at 1049 to 1286 is interaction with FKBP42/TWD1; it reads ARAGKTLALV…SSSRVKEDDA (238 aa).

It belongs to the ABC transporter superfamily. ABCB family. Multidrug resistance exporter (TC 3.A.1.201) subfamily. As to quaternary structure, interacts with 1-naphthylphthalamic acid (NPA) and FKBP42/TWD1. In terms of tissue distribution, ubiquitous, with high levels in peduncles. Mostly localized in young developing tissues, including meristems, as well as root and shoot apices.

Its subcellular location is the cell membrane. The catalysed reaction is (indol-3-yl)acetate(in) + ATP + H2O = (indol-3-yl)acetate(out) + ADP + phosphate + H(+). It carries out the reaction brassinolide(in) + ATP + H2O = brassinolide(out) + ADP + phosphate + H(+). It catalyses the reaction 24-epi-brassinolide(in) + ATP + H2O = 24-epi-brassinolide(out) + ADP + phosphate + H(+). The enzyme catalyses 24-epi-castasterone(in) + ATP + H2O = 24-epi-castasterone(out) + ADP + phosphate + H(+). The catalysed reaction is castasterone(in) + ATP + H2O = castasterone(out) + ADP + phosphate + H(+). Transport capacity is stimulated by the chaperone protein FKBP42/TWD1. Transport activity inhibited by 1-N-naphthylphthalamic acid (NPA), cyclopropyl propane dione (CPD), cyclosporin A, verapamil and quercetin. ATPase activity is specifically activated by bioactive brassinosteroids in a dose-dependent manner, including brassinolide (BL), 24-epiBL, 24-epicastasterone (24-epiCS) and castasterone-alkyne; BL binding leads to structural changes. Inhibited by vanadate. In terms of biological role, brassinosteroid exporter that, in conjunction with ABCB19, supports the accumulation of exogenous brassinosteroids (BR) in the apoplast, thus promoting BR signaling initiation involving the specific receptor BRI1 and required for plant growth and stress responses. Auxin efflux transporter that acts as a negative regulator of light signaling to promote hypocotyl elongation. May contribute to the regulation of leaf position and morphology during PHOT1-mediated blue light responses involving auxin distribution, especially in low light fluence. Together with ABCB19 and in a FKBP42/TWD1-dependent manner, supports seed development by promoting stamen elongation and, to a lesser extent, anther dehiscence and pollen maturation, probably as auxin transporters. Mediates the accumulation of chlorophyll and anthocyanin, as well as the expression of genes in response to light. Participates directly in auxin efflux and thus regulates the polar (presumably basipetal) auxin transport (from root tips to root elongating zone). Also transports some auxin metabolites such as oxindoleacetic acid and indoleacetaldehyde. Involved in diverse auxin-mediated responses including gravitropism, phototropism and lateral root formation. Confers resistance to herbicides such as dicamba, pendimethalin, oryzalin, and monosodium acid methanearsonate (MSMA), but not to herbicides such as glyphosate, atrazine, bentazon and fluazifop-p-butyl. Also mediates resistance to xenobiotics such as cycloheximide and the cytokinin N6-(2-isopentenyl)adenine (2IP). The sequence is that of ABC transporter B family member 1 from Arabidopsis thaliana (Mouse-ear cress).